Reading from the N-terminus, the 258-residue chain is Peptidase inhibitor 15 (258 aa).

Positions 1–21 (MIEMISISAAFLLSLLCETCG) are cleaved as a signal peptide. Positions 22-60 (LVLPKSSDLAIAASNYTIIKPDLSARLDPVKAPKARRKR) are excised as a propeptide. N-linked (GlcNAc...) asparagine glycans are attached at residues Asn-36 and Asn-124. The region spanning 71–211 (VEYHNQVRGK…RRAVYLVCNY (141 aa)) is the SCP domain.

It belongs to the CRISP family.

The protein localises to the secreted. Functionally, serine protease inhibitor which displays weak inhibitory activity against trypsin. May be involved in facial patterning during embryonic development. In Xenopus laevis (African clawed frog), this protein is Peptidase inhibitor 15 (pi15).